The primary structure comprises 495 residues: MASGILVNIKEEVTCPICLELLTEPLSLHCGHSFCQACITANHKKSMLYKEGERSCPVCRISYQPENIRPNRHVANIVEKLREVKLSPEEGQKVDHCARHGEKLLLFCQEDRKVICWLCERSQEHRGHHTFLMEEVAQEYHVKLQTALEMLRQKQQEAEKLEADIREEKASWKIQIDYDKTNVLADFEQLREILDWEESNELQNLEKEEEDILKSLTKSETEMVQQTQYMRELVSDLEHRLQGSVMELLQGVDGIIKRIEDMTLKKPKTFPKNQRRVFRAPDLKGMLDMFRELTDVRRYWVDVTLAPNNISHAVIAEDKRRVSSPNPQIMYRAQGTLFQSLKNFIYCTGVLGSQSITSGKHYWEVDVSKKSAWILGVCAGFQPDAMYNIEQNENYQPKYGYWVIGLQEGVKYSVFQDGSSHTPFAPFIVPLSVIICPDRVGVFVDYEACTVSFFNITNHGFLIYKFSQCSFSKPVFPYLNPRKCTVPMTLCSPSS.

Residue Ala2 is modified to N-acetylalanine. The RING-type zinc finger occupies 15–60 (CPICLELLTEPLSLHCGHSFCQACITANHKKSMLYKEGERSCPVCR). Phosphoserine is present on Ser87. The segment at 92–133 (QKVDHCARHGEKLLLFCQEDRKVICWLCERSQEHRGHHTFLM) adopts a B box-type zinc-finger fold. Residues Cys97, His100, Cys119, and His125 each coordinate Zn(2+). Residues 137–225 (AQEYHVKLQT…LTKSETEMVQ (89 aa)) adopt a coiled-coil conformation. A required for interaction with GABARAP and for autophagy region spans residues 187-200 (FEQLREILDWEESN). Positions 283–495 (LKGMLDMFRE…VPMTLCSPSS (213 aa)) constitute a B30.2/SPRY domain.

This sequence belongs to the TRIM/RBCC family. As to quaternary structure, can form homodimers and homotrimers. In addition to lower-order dimerization, also exhibits a higher-order multimerization and both low- and high-order multimerizations are essential for its restriction activity. Interacts with BTBD1 and BTBD2. Interacts with PSMC4, PSMC5, PSMD7 and HSPA8/HSC70. Interacts (via B30.2/SPRY domain) with HSPA1A/B. Interacts with PSMC2, MAP3K7/TAK1, TAB2 and TAB3. Interacts with SQSTM1. Interacts with TRIM6 and TRIM34. Interacts with ULK1 (phosphorylated form), GABARAP, GABARAPL1, GABARAPL2, MAP1LC3A, MAP1LC3C and BECN1. Post-translationally, degraded in a proteasome-independent fashion in the absence of viral infection but in a proteasome-dependent fashion following exposure to restriction sensitive virus. Autoubiquitinated in a RING finger- and UBE2D2-dependent manner. Monoubiquitinated by TRIM21. Deubiquitinated by Yersinia YopJ. Ubiquitination may not lead to proteasomal degradation.

It is found in the cytoplasm. The protein resides in the nucleus. The enzyme catalyses S-ubiquitinyl-[E2 ubiquitin-conjugating enzyme]-L-cysteine + [acceptor protein]-L-lysine = [E2 ubiquitin-conjugating enzyme]-L-cysteine + N(6)-ubiquitinyl-[acceptor protein]-L-lysine.. It participates in protein modification; protein ubiquitination. Functionally, capsid-specific restriction factor that prevents infection from non-host-adapted retroviruses. Blocks viral replication early in the life cycle, after viral entry but before reverse transcription. In addition to acting as a capsid-specific restriction factor, also acts as a pattern recognition receptor that activates innate immune signaling in response to the retroviral capsid lattice. Binding to the viral capsid triggers its E3 ubiquitin ligase activity, and in concert with the heterodimeric ubiquitin conjugating enzyme complex UBE2V1-UBE2N (also known as UBC13-UEV1A complex) generates 'Lys-63'-linked polyubiquitin chains, which in turn are catalysts in the autophosphorylation of the MAP3K7/TAK1 complex (includes TAK1, TAB2, and TAB3). Activation of the MAP3K7/TAK1 complex by autophosphorylation results in the induction and expression of NF-kappa-B and MAPK-responsive inflammatory genes, thereby leading to an innate immune response in the infected cell. Plays a role in regulating autophagy through activation of autophagy regulator BECN1 by causing its dissociation from its inhibitors BCL2 and TAB2. In Colobus guereza (Mantled guereza), this protein is Tripartite motif-containing protein 5 (TRIM5).